The primary structure comprises 322 residues: Putative HTH-type transcriptional regulatory protein rrnAC2519 (322 aa).

Residues 132–189 (LADVREDRDWSLGRLAKELGVSRRTVSKYEDGMDASVEVAAELEDLFDAPLTSPVSVL) enclose the HTH cro/C1-type domain. Residues 143–162 (LGRLAKELGVSRRTVSKYED) constitute a DNA-binding region (H-T-H motif).

The chain is Putative HTH-type transcriptional regulatory protein rrnAC2519 from Haloarcula marismortui (strain ATCC 43049 / DSM 3752 / JCM 8966 / VKM B-1809) (Halobacterium marismortui).